The chain runs to 172 residues: MADQDQNTQQTGSEAPAFNLQRVYLKDLSVEMPNAPHIFLEQEGPAVEVTINVGGQRLAETVFESTVTVTVTTRVNDKVLYLVEGTQAGIFELANIPPEQMDPILGIVCPTMLYPYLRANVADAITRTSLPALHLTEVNFQALYEQRLAEMAQQQEQSADSGIILPPSATRQ.

The protein belongs to the SecB family. Homotetramer, a dimer of dimers. One homotetramer interacts with 1 SecA dimer.

It is found in the cytoplasm. In terms of biological role, one of the proteins required for the normal export of preproteins out of the cell cytoplasm. It is a molecular chaperone that binds to a subset of precursor proteins, maintaining them in a translocation-competent state. It also specifically binds to its receptor SecA. This Bordetella avium (strain 197N) protein is Protein-export protein SecB.